The sequence spans 400 residues: Hyaluronan and proteoglycan link protein 4 (400 aa).

The first 30 residues, Met1–Ala30, serve as a signal peptide directing secretion. The region spanning Ser47–Gly155 is the Ig-like C2-type domain. Cystine bridges form between Cys69-Cys144, Cys186-Cys264, Cys210-Cys231, Cys291-Cys361, and Cys316-Cys337. An N-linked (GlcNAc...) asparagine glycan is attached at Asn133. 2 Link domains span residues Val164 to Thr266 and Gly271 to Arg363.

Belongs to the HAPLN family. As to expression, expressed predominantly in brain where it is found mainly throughout the midbrain and hindbrain in a perineuronal net pattern.

The protein localises to the secreted. It is found in the extracellular space. It localises to the extracellular matrix. Functionally, essential for the proper localization of brevican (BCAN), mainly as a perineuronal nets (PNNs)-type deposition in the brainstem and cerebellum thereby playing a key role in the formation and structural organization of PNNs. Contributes to the formation and transmission of inhibitory GABAergic synapses between Purkinje cells and deep cerebellar nuclei neurons. In Mus musculus (Mouse), this protein is Hyaluronan and proteoglycan link protein 4 (Hapln4).